Here is a 152-residue protein sequence, read N- to C-terminus: UPF0266 membrane protein YobD (152 aa).

3 consecutive transmembrane segments (helical) span residues 6–26 (LVLI…QFIM), 45–65 (VDSV…VTSH), and 67–87 (AQMT…IFWI).

This sequence belongs to the UPF0266 family.

It is found in the cell inner membrane. The protein is UPF0266 membrane protein YobD of Salmonella enteritidis PT4 (strain P125109).